The primary structure comprises 137 residues: MLVPKRVKFRRVHRGHMRGEAKGGKTVTFGDFGLQATTSSWITNRQIEAARIAMTRYMKRGGKVWIKIFPHKSYTSKGVGVRMGNGKGAPEGWVEPVKRGKVMFEVAGVPEATAREALRLAQHKLPVRTKIIAREAE.

The protein belongs to the universal ribosomal protein uL16 family. As to quaternary structure, part of the 50S ribosomal subunit.

In terms of biological role, binds 23S rRNA and is also seen to make contacts with the A and possibly P site tRNAs. This is Large ribosomal subunit protein uL16 from Leuconostoc mesenteroides subsp. mesenteroides (strain ATCC 8293 / DSM 20343 / BCRC 11652 / CCM 1803 / JCM 6124 / NCDO 523 / NBRC 100496 / NCIMB 8023 / NCTC 12954 / NRRL B-1118 / 37Y).